A 710-amino-acid polypeptide reads, in one-letter code: F-box/WD repeat-containing protein 7 (710 aa).

A disordered region spans residues 1 to 158 (MNQELLSVGS…CSSVSDLPAH (158 aa)). Position 26 is a phosphoserine (Ser-26). Over residues 46-55 (RHQEEEHTAR) the composition is skewed to basic and acidic residues. Residues 69-84 (QNDTQQGQVEENNNRF) are compositionally biased toward polar residues. Residues 87 to 132 (VDEDSSGNQEEQEEDEEHAGEQEEEEEEEEEEEEMDQESDDFDPSD) are compositionally biased toward acidic residues. A compositionally biased stretch (basic and acidic residues) spans 133–142 (DSSREDEHTH). Polar residues predominate over residues 143–158 (NSNVTNCSSVSDLPAH). The residue at position 208 (Thr-208) is a Phosphothreonine. Residue Ser-230 is modified to Phosphoserine; by SGK1. Residues 281-327 (RDFISLLPKELALYVLSFLEPKDLLQAAQTCRYWRILAEDNLLWREK) form the F-box domain. 7 WD repeats span residues 381-421 (GHDD…RTLV), 423-459 (HTGG…CIHT), 462-501 (GHTS…HVLM), 503-539 (HVAA…CLHT), 542-581 (GHTN…HTLT), 583-621 (HQSL…QTLQ), and 625-662 (KHQS…FIRN).

Homodimer; homodimerization plays a role in substrate binding and/or ubiquitination and degradation. Component of the SCF(FBXW7) complex consisting of CUL1, RBX1, SKP1 and FBXW7. Interacts (via F-box domain) with SKP1. Interacts (via F-box domain) with pseudophosphatase STYX; the interaction is direct and prevents FBXW7 interaction with SKP1. Interacts with cyclin-E (CCNE1 or CCNE2). Interacts with PSEN1. Forms a trimeric complex with NOTCH1 and SGK1. Interacts with NOTCH1 intracellular domain/NICD and NOTCH4 intracellular domain/NICD. Interacts with NOTCH2 intracellular domain (N2ICD). Interacts with MYC (when phosphorylated). Interacts with USP28, counteracting ubiquitination of MYC. Interacts (when phosphorylated at Thr-208) with PIN1, disrupting FBXW7 dimerization and promoting FBXW7 autoubiquitination and degradation. Interacts with UBE2QL1. Interacts with FAM83D; promotes FBXW7 degradation. Interacts with MYCN; FBXW7 competes with AURKA for binding to unphosphorylated MYCN but not for binding to phosphorylated MYCN. Interacts with JUN. Found in a complex with JUN and PRR7. Interacts with JUN and PRR7; the interaction inhibits ubiquitination-mediated JUN degradation, promoting its phosphorylation and transcriptional activity. Interacts with NFE2L1. Interacts with NR1D1. Interacts with RICTOR; mediates RICTOR ubiquitination and degradation. Interacts with USP38, counteracting ubiquitination of MYC. Post-translationally, phosphorylation at Thr-208 promotes interaction with PIN1, leading to disrupt FBXW7 dimerization and promoting FBXW7 autoubiquitination and degradation. Phosphorylated by ATM at Ser-26 in response to DNA damage, promoting recruitment to DNA damage sites and 'Lys-63'-linked ubiquitination of phosphorylated XRCC4. In terms of processing, ubiquitinated: autoubiquitinates following phosphorylation at Thr-208 and subsequent interaction with PIN1. Ubiquitination leads to its proteasomal degradation. As to expression, widely expressed with highest levels in brain, heart and testis.

It is found in the nucleus. The protein localises to the nucleoplasm. It localises to the chromosome. It participates in protein modification; protein ubiquitination. Substrate recognition component of a SCF (SKP1-CUL1-F-box protein) E3 ubiquitin-protein ligase complex which mediates the ubiquitination and subsequent proteasomal degradation of target proteins. Recognizes and binds phosphorylated sites/phosphodegrons within target proteins and thereafter brings them to the SCF complex for ubiquitination. Mediates ubiquitination and subsequent degradation of CCNE1 and MYC. Identified substrates include cyclin-E (CCNE1 or CCNE2), DISC1, JUN, MYC, NOTCH1 released notch intracellular domain (NICD), NOTCH2, MCL1, MLST8, RICTOR and probably PSEN1. Acts as a negative regulator of JNK signaling by binding to phosphorylated JUN and promoting its ubiquitination and subsequent degradation. SCF(FBXW7) complex mediates the ubiquitination and subsequent degradation of NFE2L1. Involved in bone homeostasis and negative regulation of osteoclast differentiation. Regulates the amplitude of the cyclic expression of hepatic core clock genes and genes involved in lipid and glucose metabolism via ubiquitination and proteasomal degradation of their transcriptional repressor NR1D1; CDK1-dependent phosphorylation of NR1D1 is necessary for SCF(FBXW7)-mediated ubiquitination. Also able to promote 'Lys-63'-linked ubiquitination in response to DNA damage. The SCF(FBXW7) complex facilitates double-strand break repair following phosphorylation by ATM: phosphorylation promotes localization to sites of double-strand breaks and 'Lys-63'-linked ubiquitination of phosphorylated XRCC4, enhancing DNA non-homologous end joining. In Mus musculus (Mouse), this protein is F-box/WD repeat-containing protein 7.